The sequence spans 353 residues: Ribosomal RNA large subunit methyltransferase M (353 aa).

Residues Ser183, Ala216–Gly219, Asp235, Asp255, and Asp271 each bind S-adenosyl-L-methionine. Lys300 serves as the catalytic Proton acceptor.

Belongs to the class I-like SAM-binding methyltransferase superfamily. RNA methyltransferase RlmE family. RlmM subfamily. Monomer.

It localises to the cytoplasm. It carries out the reaction cytidine(2498) in 23S rRNA + S-adenosyl-L-methionine = 2'-O-methylcytidine(2498) in 23S rRNA + S-adenosyl-L-homocysteine + H(+). Its function is as follows. Catalyzes the 2'-O-methylation at nucleotide C2498 in 23S rRNA. This chain is Ribosomal RNA large subunit methyltransferase M, found in Azotobacter vinelandii (strain DJ / ATCC BAA-1303).